A 178-amino-acid polypeptide reads, in one-letter code: Caveolin-1 (178 aa).

Serine 2 carries the N-acetylserine modification. Phosphoserine is present on serine 2. The required for homooligomerization stretch occupies residues 2–94 (SGGKYVDSEG…WKASFTTFTV (93 aa)). Topologically, residues 2–104 (SGGKYVDSEG…TKYWFYRLLS (103 aa)) are cytoplasmic. An N6-acetyllysine; alternate modification is found at lysine 5. Lysine 5 is covalently cross-linked (Glycyl lysine isopeptide (Lys-Gly) (interchain with G-Cter in ubiquitin); alternate). Position 6 is a phosphotyrosine (tyrosine 6). At serine 9 the chain carries Phosphoserine. Tyrosine 14 carries the phosphotyrosine; by ABL1 modification. Tyrosine 25 is modified (phosphotyrosine). Glycyl lysine isopeptide (Lys-Gly) (interchain with G-Cter in ubiquitin) cross-links involve residues lysine 26, lysine 30, lysine 39, lysine 47, and lysine 57. Residues 82 to 94 (DGIWKASFTTFTV) form an interaction with CAVIN3 region. Residues 105–125 (ALFGIPMALIWGIYFAILSFL) constitute an intramembrane region (helical). Topologically, residues 126-178 (HIWAVVPCIKSFLIEIQCISRVYSIYVHTFCDPLFEAIGKIFSNIRINMQKEI) are cytoplasmic. The tract at residues 131–142 (VPCIKSFLIEIQ) is interacts with SPRY1, SPRY2, SPRY3 and SPRY4. 3 S-palmitoyl cysteine lipidation sites follow: cysteine 133, cysteine 143, and cysteine 156. An interacts with SPRY1, SPRY2, and SPRY4 region spans residues 149–160 (SIYVHTFCDPLF). The tract at residues 167 to 178 (FSNIRINMQKEI) is interacts with SPRY1, SPRY2, SPRY3 and SPRY4.

This sequence belongs to the caveolin family. In terms of assembly, homooligomer. Interacts with GLIPR2. Interacts with NOSTRIN. Interacts with SNAP25 and STX1A. Interacts (via the N-terminus) with DPP4; the interaction is direct. Interacts with CTNNB1, CDH1 and JUP. Interacts with PACSIN2; this interaction induces membrane tubulation. Interacts with SLC7A9. Interacts with BMX and BTK. Interacts with TGFBR1. Interacts with CAVIN3 (via leucine-zipper domain) in a cholesterol-sensitive manner. Interacts with CAVIN1. Interacts with EHD2 in a cholesterol-dependent manner. Forms a ternary complex with UBXN6 and VCP; mediates CAV1 targeting to lysosomes for degradation. Interacts with ABCG1; this interaction regulates ABCG1-mediated cholesterol efflux. Interacts with NEU3; this interaction enhances NEU3 sialidase activity within caveola. Interacts (via C-terminus) with SPRY1, SPRY2 (via C-terminus), SPRY3, and SPRY4. Interacts with IGFBP5; this interaction allows trafficking of IGFBP5 from the plasma membrane to the nucleus. Post-translationally, phosphorylated at Tyr-14 by ABL1 in response to oxidative stress. Ubiquitinated. Undergo monoubiquitination and multi- and/or polyubiquitination. Monoubiquitination of N-terminal lysines promotes integration in a ternary complex with UBXN6 and VCP which promotes oligomeric CAV1 targeting to lysosomes for degradation. Ubiquitinated by ZNRF1; leading to degradation and modulation of the TLR4-mediated immune response.

It is found in the golgi apparatus membrane. The protein localises to the cell membrane. It localises to the membrane. The protein resides in the caveola. Its subcellular location is the membrane raft. May act as a scaffolding protein within caveolar membranes. Forms a stable heterooligomeric complex with CAV2 that targets to lipid rafts and drives caveolae formation. Mediates the recruitment of CAVIN proteins (CAVIN1/2/3/4) to the caveolae. Interacts directly with G-protein alpha subunits and can functionally regulate their activity. Involved in the costimulatory signal essential for T-cell receptor (TCR)-mediated T-cell activation. Its binding to DPP4 induces T-cell proliferation and NF-kappa-B activation in a T-cell receptor/CD3-dependent manner. Recruits CTNNB1 to caveolar membranes and may regulate CTNNB1-mediated signaling through the Wnt pathway. Negatively regulates TGFB1-mediated activation of SMAD2/3 by mediating the internalization of TGFBR1 from membrane rafts leading to its subsequent degradation. Binds 20(S)-hydroxycholesterol (20(S)-OHC). The protein is Caveolin-1 (CAV1) of Muntiacus reevesi (Reeves' muntjac).